The sequence spans 199 residues: Ribonuclease HII (199 aa).

Residues 10–199 (HLVAGVDEVG…VKRALGLASN (190 aa)) enclose the RNase H type-2 domain. A divalent metal cation-binding residues include aspartate 16, glutamate 17, and aspartate 108.

This sequence belongs to the RNase HII family. It depends on Mn(2+) as a cofactor. Requires Mg(2+) as cofactor.

The protein resides in the cytoplasm. The enzyme catalyses Endonucleolytic cleavage to 5'-phosphomonoester.. Functionally, endonuclease that specifically degrades the RNA of RNA-DNA hybrids. The protein is Ribonuclease HII of Klebsiella pneumoniae (strain 342).